Here is a 180-residue protein sequence, read N- to C-terminus: Guanosine-3',5'-bis(diphosphate) 3'-pyrophosphohydrolase MESH1 (180 aa).

An HD domain is found at 33 to 128 (YINHPIGVAR…VKLADKLYNL (96 aa)). Residues His36, His62, and Asp63 each contribute to the Mn(2+) site. Active-site nucleophile residues include Glu66 and Asp67. Asp123 serves as a coordination point for Mn(2+).

It belongs to the MESH1 family. The cofactor is Mn(2+).

The enzyme catalyses guanosine 3',5'-bis(diphosphate) + H2O = GDP + diphosphate + H(+). In terms of biological role, ppGpp hydrolyzing enzyme involved in starvation response. This chain is Guanosine-3',5'-bis(diphosphate) 3'-pyrophosphohydrolase MESH1 (hddc3), found in Danio rerio (Zebrafish).